Here is a 100-residue protein sequence, read N- to C-terminus: NAD(P)H-quinone oxidoreductase subunit 4L, chloroplastic (100 aa).

Transmembrane regions (helical) follow at residues 1–21 (MLEH…YGLI), 29–49 (ALMC…TFSN), and 63–83 (IFVT…ALAI).

Belongs to the complex I subunit 4L family. NDH is composed of at least 16 different subunits, 5 of which are encoded in the nucleus.

Its subcellular location is the plastid. It localises to the chloroplast thylakoid membrane. The enzyme catalyses a plastoquinone + NADH + (n+1) H(+)(in) = a plastoquinol + NAD(+) + n H(+)(out). It carries out the reaction a plastoquinone + NADPH + (n+1) H(+)(in) = a plastoquinol + NADP(+) + n H(+)(out). In terms of biological role, NDH shuttles electrons from NAD(P)H:plastoquinone, via FMN and iron-sulfur (Fe-S) centers, to quinones in the photosynthetic chain and possibly in a chloroplast respiratory chain. The immediate electron acceptor for the enzyme in this species is believed to be plastoquinone. Couples the redox reaction to proton translocation, and thus conserves the redox energy in a proton gradient. In Cycas taitungensis (Prince sago), this protein is NAD(P)H-quinone oxidoreductase subunit 4L, chloroplastic.